Reading from the N-terminus, the 83-residue chain is Hainantoxin-III 9 (83 aa).

An N-terminal signal peptide occupies residues 1–21 (MKASMFLALAGLALLFVVCYA). A propeptide spanning residues 22–48 (SESEEKEFPIELLSKIFAVDVFKGEER) is cleaved from the precursor. Disulfide bonds link C50–C65, C57–C70, and C64–C77. The residue at position 81 (L81) is a Leucine amide.

Belongs to the neurotoxin 10 (Hwtx-1) family. 15 (Hntx-3) subfamily. Monomer. In terms of tissue distribution, expressed by the venom gland.

It localises to the secreted. Selective antagonist of neuronal tetrodotoxin (TTX)-sensitive voltage-gated sodium channels (IC(50)=1270 nM on Nav1.1/SCN1A, 270 nM on Nav1.2/SCN2A, 491 nM on Nav1.3/SCN3A and 232 nM on Nav1.7/SCN9A). This toxin suppress Nav1.7 current amplitude without significantly altering the activation, inactivation, and repriming kinetics. Short extreme depolarizations partially activate the toxin-bound channel, indicating voltage-dependent inhibition of this toxin. This toxin increases the deactivation of the Nav1.7 current after extreme depolarizations. The toxin-Nav1.7 complex is gradually dissociated upon prolonged strong depolarizations in a voltage-dependent manner, and the unbound toxin rebinds to Nav1.7 after a long repolarization. Moreover, analysis of chimeric channels showed that the DIIS3-S4 linker is critical for toxin binding to Nav1.7. These data are consistent with this toxin interacting with Nav1.7 site 4 and trapping the domain II voltage sensor in the closed state. This Cyriopagopus hainanus (Chinese bird spider) protein is Hainantoxin-III 9.